The sequence spans 1709 residues: Intraflagellar transport protein 122 (1709 aa).

WD repeat units lie at residues 51-89 and 132-171; these read TQHP…ALFK and SFKG…LNSC. The interval 209–229 is disordered; sequence TIPQTVTPSASASGRSGSGKR. The WD 3 repeat unit spans residues 634 to 673; it reads LHRSPIVSLDISPDRKYISVVDRSDVVSVYKFLDDSEIVL. One copy of the LRR 1 repeat lies at 1231–1256; the sequence is IEALERLRLSGNTSKEAIIIKQLIDA. The interval 1378 to 1404 is disordered; sequence LSGEDTVKASSQRSKKDNPPSLRSTIG. One copy of the LRR 2 repeat lies at 1414-1436; the sequence is LGSLAHIDLGINNMNIPPGISEL.

It localises to the cell projection. The protein localises to the cilium. Its subcellular location is the flagellum. The protein resides in the cytoplasm. It is found in the cytoskeleton. It localises to the flagellum axoneme. The protein localises to the flagellum basal body. Its function is as follows. Component of the intraflagellar transport complex A (IFT-A) involved in flagellar assembly. The protein is Intraflagellar transport protein 122 of Giardia intestinalis (strain ATCC 50803 / WB clone C6) (Giardia lamblia).